The primary structure comprises 191 residues: Putative 3-methyladenine DNA glycosylase (191 aa).

Belongs to the DNA glycosylase MPG family.

This chain is Putative 3-methyladenine DNA glycosylase, found in Cutibacterium acnes (strain DSM 16379 / KPA171202) (Propionibacterium acnes).